The primary structure comprises 519 residues: Glucose-1-phosphate adenylyltransferase large subunit 3, chloroplastic/amyloplastic (519 aa).

Residues 1–74 constitute a chloroplast transit peptide; it reads MQFSSVFPLE…DAGPDTLHVR (74 aa).

The protein belongs to the bacterial/plant glucose-1-phosphate adenylyltransferase family. Heterotetramer composed of two small and two large subunits. As to expression, expressed in stems.

The protein resides in the plastid. Its subcellular location is the chloroplast. It carries out the reaction alpha-D-glucose 1-phosphate + ATP + H(+) = ADP-alpha-D-glucose + diphosphate. It functions in the pathway glycan biosynthesis; starch biosynthesis. Activated by 3'phosphoglycerate, inhibited by orthophosphate. Allosteric regulation. Its function is as follows. Involved in synthesis of starch. Catalyzes the synthesis of ADP-glucose, a molecule that serves as an activated glycosyl donor for alpha-1,4-glucan synthesis. Essential for starch synthesis in leaf chloroplasts. The chain is Glucose-1-phosphate adenylyltransferase large subunit 3, chloroplastic/amyloplastic from Oryza sativa subsp. japonica (Rice).